We begin with the raw amino-acid sequence, 306 residues long: MKIDIVSVFPEYFEVLNLSLLGKAQEKGLVEVTAHNLRDWTHDVHHSVDDTPVGGGAGMVMKPEVWSECLDELLHLEPTTVTCDSMVTCDSTADADDTASADAAEPAESATEIAANADTVPATDRPVLIFPNPSAPLFTQQDATELSHANHLLFGCGRYEGYDARIPQYYRAQGVDVREYSIGDYVLNGGEVAVSVMLEAITRLLPGFMGNAASIVEESYTGENALLEHRQYTKPADWRGIKVPDVLLSGDHAKVDRFRRDEALAKTNELRPDLIEALDCSKLDKADRKTLMALGWEVSGAHPRQR.

S-adenosyl-L-methionine-binding positions include Gly157 and 182-187; that span reads IGDYVL.

The protein belongs to the RNA methyltransferase TrmD family. In terms of assembly, homodimer.

It localises to the cytoplasm. The enzyme catalyses guanosine(37) in tRNA + S-adenosyl-L-methionine = N(1)-methylguanosine(37) in tRNA + S-adenosyl-L-homocysteine + H(+). Its function is as follows. Specifically methylates guanosine-37 in various tRNAs. This is tRNA (guanine-N(1)-)-methyltransferase from Bifidobacterium adolescentis (strain ATCC 15703 / DSM 20083 / NCTC 11814 / E194a).